We begin with the raw amino-acid sequence, 725 residues long: Ribonuclease Y (725 aa).

The chain crosses the membrane as a helical span at residues 4-24 (VLVILLSLVLLVLVALILAVA). 3 disordered regions span residues 62-140 (DGPA…ASDT), 165-195 (VAATEDTSLEAPLRESALRESAPGESASVRR), and 300-321 (EQRVEERTAGLDEHASRLAGRE). Low complexity-rich tracts occupy residues 84 to 100 (DAPGAAYGESAAAPDAG) and 114 to 137 (AAAPEPGAAIGGAPTPAAGSPADA). In terms of domain architecture, KH spans 415 to 481 (VVTVLHLPGD…RITLAALVSD (67 aa)). Positions 541–634 (VLAHLIESAH…TQAADQISGG (94 aa)) constitute an HD domain.

The protein belongs to the RNase Y family.

The protein localises to the cell membrane. Its function is as follows. Endoribonuclease that initiates mRNA decay. The protein is Ribonuclease Y of Frankia alni (strain DSM 45986 / CECT 9034 / ACN14a).